The following is a 492-amino-acid chain: Fascin-2 (492 aa).

It belongs to the fascin family. In terms of tissue distribution, exclusively expressed in the eye, specifically in photoreceptor cells.

The protein resides in the cytoplasm. The protein localises to the cytoskeleton. Its subcellular location is the cell projection. It is found in the stereocilium. Acts as an actin bundling protein. May play a pivotal role in photoreceptor cell-specific events, such as disk morphogenesis. This is Fascin-2 (FSCN2) from Bos taurus (Bovine).